Consider the following 794-residue polypeptide: uncharacterized protein (794 aa).

Residues 1 to 22 form the signal peptide; sequence MKLKYGTIIFSGLLGVSAILAA. The N-palmitoyl cysteine moiety is linked to residue Cys-23. The S-diacylglycerol cysteine moiety is linked to residue Cys-23. The span at 177–196 shows a compositional bias: polar residues; the sequence is SSGKTQVSQTSSGSNQQKTL. Disordered regions lie at residues 177 to 208, 220 to 257, and 466 to 506; these read SSGK…SDSS, AKNN…DKKI, and KSTD…ENNS. The span at 220–231 shows a compositional bias: low complexity; it reads AKNNGKKANNSK. Residues 238–250 are compositionally biased toward polar residues; the sequence is DQSTQTHNDQGDA.

This sequence belongs to the MG185/MG260 family.

The protein resides in the cell membrane. This is an uncharacterized protein from Mycoplasma pneumoniae (strain ATCC 29342 / M129 / Subtype 1) (Mycoplasmoides pneumoniae).